We begin with the raw amino-acid sequence, 376 residues long: Chaperone protein DnaJ (376 aa).

Positions 4-68 (DYYEILGVAR…ETRARYDRFG (65 aa)) constitute a J domain. The tract at residues 102–121 (GGMGGPTQQRRRGGPARGDD) is disordered. The CR-type zinc-finger motif lies at 136–218 (GGEKEIRISH…CDGKGTNQVT (83 aa)). Cys-149, Cys-152, Cys-166, Cys-169, Cys-192, Cys-195, Cys-206, and Cys-209 together coordinate Zn(2+). 4 CXXCXGXG motif repeats span residues 149–156 (CETCSGSG), 166–173 (CSTCSGSG), 192–199 (CPTCNGTG), and 206–213 (CDACDGKG).

Belongs to the DnaJ family. As to quaternary structure, homodimer. Requires Zn(2+) as cofactor.

It localises to the cytoplasm. Participates actively in the response to hyperosmotic and heat shock by preventing the aggregation of stress-denatured proteins and by disaggregating proteins, also in an autonomous, DnaK-independent fashion. Unfolded proteins bind initially to DnaJ; upon interaction with the DnaJ-bound protein, DnaK hydrolyzes its bound ATP, resulting in the formation of a stable complex. GrpE releases ADP from DnaK; ATP binding to DnaK triggers the release of the substrate protein, thus completing the reaction cycle. Several rounds of ATP-dependent interactions between DnaJ, DnaK and GrpE are required for fully efficient folding. Also involved, together with DnaK and GrpE, in the DNA replication of plasmids through activation of initiation proteins. This Trichormus variabilis (strain ATCC 29413 / PCC 7937) (Anabaena variabilis) protein is Chaperone protein DnaJ.